The sequence spans 1194 residues: Rho-associated protein kinase let-502 (1194 aa).

In terms of domain architecture, Protein kinase spans F68–F330. ATP-binding positions include I74 to V82 and K97. The Proton acceptor role is filled by D190. One can recognise an AGC-kinase C-terminal domain in the interval K331–L402. Coiled coils occupy residues E436–R844 and G875–Q933. One can recognise a RhoBD domain in the interval E784–P846. In terms of domain architecture, PH spans I961 to S1171. A Phorbol-ester/DAG-type zinc finger spans residues R1085 to C1138.

Belongs to the protein kinase superfamily. AGC Ser/Thr protein kinase family. In terms of assembly, interacts with rho-1. Mg(2+) serves as cofactor.

Its subcellular location is the cytoplasm. It is found in the cytoskeleton. It localises to the cleavage furrow. The enzyme catalyses L-seryl-[protein] + ATP = O-phospho-L-seryl-[protein] + ADP + H(+). The catalysed reaction is L-threonyl-[protein] + ATP = O-phospho-L-threonyl-[protein] + ADP + H(+). Activated by rho-1 binding. Its function is as follows. Negatively regulates mel-11 to relieve the inhibition of mlc-4, allowing contraction of the circumferentially oriented microfilaments in epidermal cells and thereby regulating myosin II contractility during spermathecal contraction, cleavage furrow contraction in early embryos, and embryonic elongation and morphogenesis. Required for P-cell migration. May also play a role in oocyte cellularization. This Caenorhabditis briggsae protein is Rho-associated protein kinase let-502.